A 585-amino-acid polypeptide reads, in one-letter code: Pyruvate kinase (585 aa).

Arg-32 provides a ligand contact to substrate. The K(+) site is built by Asn-34, Ser-36, Asp-66, and Thr-67. 34–37 provides a ligand contact to ATP; it reads NFSH. ATP-binding residues include Arg-73 and Lys-156. Glu-221 is a binding site for Mg(2+). The substrate site is built by Gly-244, Asp-245, and Thr-277. Asp-245 serves as a coordination point for Mg(2+).

It belongs to the pyruvate kinase family. This sequence in the C-terminal section; belongs to the PEP-utilizing enzyme family. It depends on Mg(2+) as a cofactor. K(+) serves as cofactor.

The enzyme catalyses pyruvate + ATP = phosphoenolpyruvate + ADP + H(+). It participates in carbohydrate degradation; glycolysis; pyruvate from D-glyceraldehyde 3-phosphate: step 5/5. This is Pyruvate kinase (pyk) from Staphylococcus aureus (strain MRSA252).